Consider the following 581-residue polypeptide: ATP-dependent lipid A-core flippase (581 aa).

The next 5 membrane-spanning stretches (helical) occupy residues 15–35 (LWPI…ALIL), 68–88 (LIVI…SYCI), 152–172 (IIGL…ILIV), 252–272 (PIIQ…ASFP), and 274–294 (IMET…IALM). An ABC transmembrane type-1 domain is found at 27-309 (IVAAVALILN…LTNVNAQFQR (283 aa)). Positions 341 to 577 (IEFRNVTFCY…NGVYSQLHRM (237 aa)) constitute an ABC transporter domain. 375 to 382 (GRSGSGKS) is an ATP binding site.

Belongs to the ABC transporter superfamily. Lipid exporter (TC 3.A.1.106) family. As to quaternary structure, homodimer.

The protein resides in the cell inner membrane. The catalysed reaction is ATP + H2O + lipid A-core oligosaccharideSide 1 = ADP + phosphate + lipid A-core oligosaccharideSide 2.. In terms of biological role, involved in lipopolysaccharide (LPS) biosynthesis. Translocates lipid A-core from the inner to the outer leaflet of the inner membrane. Transmembrane domains (TMD) form a pore in the inner membrane and the ATP-binding domain (NBD) is responsible for energy generation. This Photorhabdus laumondii subsp. laumondii (strain DSM 15139 / CIP 105565 / TT01) (Photorhabdus luminescens subsp. laumondii) protein is ATP-dependent lipid A-core flippase.